The following is a 73-amino-acid chain: MSKLGVLLTICLLLFPITALPMDGDQPADRLAERMQDNISSEEHPFEKRQRLCCGFPKSCRSRQCKPHRCCGR.

The first 19 residues, 1 to 19, serve as a signal peptide directing secretion; that stretch reads MSKLGVLLTICLLLFPITA. Residues 20-49 constitute a propeptide that is removed on maturation; the sequence is LPMDGDQPADRLAERMQDNISSEEHPFEKR. Residue Gln-50 is modified to Pyrrolidone carboxylic acid. 6 disulfide bridges follow: Cys-53–Cys-65, Cys-53–Cys-70, Cys-54–Cys-70, Cys-54–Cys-71, Cys-60–Cys-65, and Cys-60–Cys-71. Pro-57 bears the 4-hydroxyproline mark. 4-hydroxyproline is present on Pro-67. Position 71 is a cysteine amide (Cys-71).

This sequence belongs to the conotoxin M superfamily. Post-translationally, 3D-structure of 3 disulfide-bond connectivities isomers is described (PIIIA-1 (C1-C5, C2-C6, C3-C4), PIIIA-2 (C1-C4, C2-C5, C3-C6) and PIIIA-3 (C1-C2, C3-C4, C5-C6)). Only PIIIA-2 contains the cysteine connectivity described as typical for native mu-conotoxins. However, PIIIA-1 is more potent than PIIIA-2, suggesting another possible disulfid connectivity. For this reason, both connectivities have been indicated in features. As to expression, expressed by the venom duct.

The protein resides in the secreted. Its function is as follows. Mu-conotoxins block voltage-gated sodium channels (Nav). This toxin potently blocks rNav1.4/SCN4A (IC(50)=36-41 nM). It also moderately blocks rNav1.1/SCN1A (IC(50)=120 nM), rNav1.2/SCN2A (IC(50)=620 nM), rNav1.3/SCN3A (IC(50)=3.2 uM), mNav1.6/SCN8A (IC(50)=100 nM). This inhibition is reversible. The block of Nav1.1, Nav1.2, and Nav1.6 is modified when beta-subunits are coexpressed with alpha subunits. Hence, blocks of channels containing the beta-1 and beta-3 subunits are more potent (compared to channels without beta subunits), whereas blocks of channels containing the beta-2 and beta-4 are less potent (compared to channels without beta subunits). In vivo, this peptide causes flaccid paralysis in both mice and fish. The sequence is that of Mu-conotoxin PIIIA from Conus purpurascens (Purple cone).